We begin with the raw amino-acid sequence, 268 residues long: Glucosamine-6-phosphate deaminase (268 aa).

Catalysis depends on aspartate 72, which acts as the Proton acceptor; for enolization step. Aspartate 141 (for ring-opening step) is an active-site residue. The active-site Proton acceptor; for ring-opening step is histidine 143. Glutamate 148 acts as the For ring-opening step in catalysis.

The protein belongs to the glucosamine/galactosamine-6-phosphate isomerase family. NagB subfamily. In terms of assembly, homohexamer.

The enzyme catalyses alpha-D-glucosamine 6-phosphate + H2O = beta-D-fructose 6-phosphate + NH4(+). Its pathway is amino-sugar metabolism; N-acetylneuraminate degradation; D-fructose 6-phosphate from N-acetylneuraminate: step 5/5. With respect to regulation, allosterically activated by N-acetylglucosamine 6-phosphate (GlcNAc6P). Functionally, catalyzes the reversible isomerization-deamination of glucosamine 6-phosphate (GlcN6P) to form fructose 6-phosphate (Fru6P) and ammonium ion. This is Glucosamine-6-phosphate deaminase from Histophilus somni (strain 129Pt) (Haemophilus somnus).